Reading from the N-terminus, the 145-residue chain is Class I hydrophobin rodE (145 aa).

4 cysteine pairs are disulfide-bonded: Cys43-Cys126, Cys59-Cys120, Cys60-Cys95, and Cys127-Cys140.

The protein belongs to the fungal hydrophobin family. Self-assembles to form functional amyloid fibrils called rodlets. Self-assembly into fibrillar rodlets occurs spontaneously at hydrophobic:hydrophilic interfaces and the rodlets further associate laterally to form amphipathic monolayers.

In terms of biological role, aerial growth, conidiation, and dispersal of filamentous fungi in the environment rely upon a capability of their secreting small amphipathic proteins called hydrophobins (HPBs) with low sequence identity. Class I can self-assemble into an outermost layer of rodlet bundles on aerial cell surfaces, conferring cellular hydrophobicity that supports fungal growth, development and dispersal; whereas Class II form highly ordered films at water-air interfaces through intermolecular interactions but contribute nothing to the rodlet structure. RodE is a class I hydrophobin that, unlike rodA, is not required for rodlet formation. The sequence is that of Class I hydrophobin rodE from Aspergillus fumigatus (strain ATCC MYA-4609 / CBS 101355 / FGSC A1100 / Af293) (Neosartorya fumigata).